Consider the following 647-residue polypeptide: Neutral endopeptidase (647 aa).

Positions 1–647 (MRRYLAVRGG…LDPEDRITIW (647 aa)) constitute a Peptidase M13 domain. His-496 lines the Zn(2+) pocket. Residue Glu-497 is part of the active site. Zn(2+) is bound by residues His-500 and Glu-556. Residue Asp-560 is the Proton donor of the active site.

This sequence belongs to the peptidase M13 family. Zn(2+) serves as cofactor.

This is Neutral endopeptidase (pepO) from Lactobacillus helveticus (Lactobacillus suntoryeus).